The sequence spans 273 residues: 4-hydroxybenzoate octaprenyltransferase (273 aa).

Helical transmembrane passes span 7-27 (IGIY…SEGF), 30-50 (LKLL…GCVI), 83-103 (FFVL…WLTI), 122-142 (WTYF…LMAF), 146-166 (LNEI…WTVI), 197-217 (LIIG…SNVF), 221-241 (ISYH…QYLI), and 253-273 (FLHN…SVGL).

This sequence belongs to the UbiA prenyltransferase family. The cofactor is Mg(2+).

Its subcellular location is the cell inner membrane. The enzyme catalyses all-trans-octaprenyl diphosphate + 4-hydroxybenzoate = 4-hydroxy-3-(all-trans-octaprenyl)benzoate + diphosphate. It participates in cofactor biosynthesis; ubiquinone biosynthesis. Functionally, catalyzes the prenylation of para-hydroxybenzoate (PHB) with an all-trans polyprenyl group. Mediates the second step in the final reaction sequence of ubiquinone-8 (UQ-8) biosynthesis, which is the condensation of the polyisoprenoid side chain with PHB, generating the first membrane-bound Q intermediate 3-octaprenyl-4-hydroxybenzoate. This Vesicomyosocius okutanii subsp. Calyptogena okutanii (strain HA) protein is 4-hydroxybenzoate octaprenyltransferase.